Consider the following 113-residue polypeptide: MQTPTARSSTNVYGKLVDNETRCFHYHSKADVVALRCGQCEKFYACFQCHDELNTHPFLPWRKAKFHIPCVICGACKNSLTVEEYRSTVHCKYCNHPFNPKCKNHAGYYFEDA.

The segment at 16-96 adopts a CHY-type; degenerate zinc-finger fold; it reads LVDNETRCFH…STVHCKYCNH (81 aa). The Zn(2+) site is built by Cys23, His25, Cys46, Cys49, Cys73, Cys76, Cys91, and Cys94.

The protein localises to the cytoplasm. It is found in the nucleus. This is an uncharacterized protein from Schizosaccharomyces pombe (strain 972 / ATCC 24843) (Fission yeast).